A 693-amino-acid chain; its full sequence is Guanyl-specific ribonuclease pgl-3 (693 aa).

Residues 205 to 447 (KKLMIEGPKI…VNRIIESLEK (243 aa)) are involved in dimerization. His-437 serves as the catalytic Proton acceptor. Disordered stretches follow at residues 445-468 (LEKSSSSEPSATAKQTTTSNGPTT), 523-591 (AEKN…DATP), and 620-693 (SSNG…RGGS). Low complexity predominate over residues 447 to 468 (KSSSSEPSATAKQTTTSNGPTT). Polar residues-rich tracts occupy residues 528 to 548 (NTPSTASPVQFSSDGWDSPTK) and 569 to 580 (ITKVSPQPQERT). The interval 581 to 614 (GTAWGSGDATPVPLATPVNEYKVSGFGAAPVASG) is required for interaction with sepa-1. Composition is skewed to gly residues over residues 625–634 (SGRGSYGGGR), 641–660 (RGAYGGDRGRGGSGDGSRGY), and 668–693 (RGSYGEGSRGYQGGRAGFFGGSRGGS). The tract at residues 633–693 (GRGGDRGGRG…GFFGGSRGGS (61 aa)) is RNA-binding RGG-box.

As to quaternary structure, may form a homodimer. Interacts with pgl-1 and pgl-2; this association is not required for P-granule localization of either pgl-1 or pgl-2. Interacts with sepa-1; the interaction is enhanced in the presence of RNA. Interacts with prmt-1; the interaction is direct. Methylated at arginine residues in the RNA-binding RGG-box by prmt-1. Methylation promotes P-granule degradation by autophagy. As to expression, highly expressed in the germline. Expressed in most somatic cells.

It localises to the cytoplasmic granule. It carries out the reaction [RNA] containing guanosine + H2O = an [RNA fragment]-3'-guanosine-3'-phosphate + a 5'-hydroxy-ribonucleotide-3'-[RNA fragment].. Functionally, guanyl-specific endoribonuclease which cleaves the phosphodiester bond in single-stranded RNA between the 3'-guanylic residue and the 5'-OH residue of adjacent nucleotide, resulting in the formation of a corresponding 2',3'-cyclic phosphate intermediate. P-granule component involved in germline development. Together with the P-granule component pgl-1, is involved in the formation of P-granules. Together with pgl-1, probably recruits other granule components such as pos-1, mex-3 and glh-1, and RNA to P-granules. In vitro, binds mRNA; this interaction is required for the formation of liquid-like droplets that resemble P-granules. Most likely recruits pgl-1 into P-granules during autophagy. Associates with adapters such as sepa-1 and is required for the accumulation and degradation of P-granules by autophagy in somatic cells. This ensures exclusive localization of the P-granules in germ cells. In addition, may act redundantly with pgl-1 to protect germ cells from excessive germline apoptosis during normal oogenesis and development of the two gonadal arms. This may in part be through regulating the localization of sir-2.1 which is involved in germ cell apoptosis. May protect somatic cells from excessive apoptosis during normal development. The protein is Guanyl-specific ribonuclease pgl-3 of Caenorhabditis elegans.